Reading from the N-terminus, the 240-residue chain is Penton protein H240R (240 aa).

The protein belongs to the asfivirus H240R family.

It localises to the virion. Its function is as follows. Forms the penton at the fivefold vertices of the icosahedral capsid. Together with the minor capsid proteins (p17, p49, and M1249L), forms a complicated network immediately below the outer capsid shell, stabilizing the whole capsid. This chain is Penton protein H240R, found in African swine fever virus (strain Badajoz 1971 Vero-adapted) (Ba71V).